The sequence spans 260 residues: Ribose-5-phosphate isomerase (260 aa).

Belongs to the ribose 5-phosphate isomerase family.

The protein localises to the cytoplasm. The enzyme catalyses aldehydo-D-ribose 5-phosphate = D-ribulose 5-phosphate. It participates in carbohydrate degradation; pentose phosphate pathway; D-ribose 5-phosphate from D-ribulose 5-phosphate (non-oxidative stage): step 1/1. The chain is Ribose-5-phosphate isomerase (RKI1) from Candida glabrata (strain ATCC 2001 / BCRC 20586 / JCM 3761 / NBRC 0622 / NRRL Y-65 / CBS 138) (Yeast).